A 1947-amino-acid polypeptide reads, in one-letter code: Sodium channel protein type 3 subunit alpha (1947 aa).

The Cytoplasmic portion of the chain corresponds to M1 to S128. Positions R28–N60 are disordered. Residues E46–A57 are compositionally biased toward basic and acidic residues. An I repeat occupies I110–Q455. Residues L129–T146 traverse the membrane as a helical segment. The Extracellular portion of the chain corresponds to L147 to D152. Residues W153 to L174 traverse the membrane as a helical segment. Topologically, residues A175–D188 are cytoplasmic. The chain crosses the membrane as a helical span at residues P189 to F206. The Extracellular portion of the chain corresponds to V207–S213. The N-linked (GlcNAc...) asparagine glycan is linked to N211. The helical transmembrane segment at A214–T235 threads the bilayer. The Cytoplasmic segment spans residues I236–D249. Residues V250–F269 traverse the membrane as a helical segment. Residues M270–F369 lie on the Extracellular side of the membrane. N290, N296, N302, N307, and N339 each carry an N-linked (GlcNAc...) asparagine glycan. The segment at residues S370 to E386 is an intramembrane region (pore-forming). The Extracellular segment spans residues N387 to G397. Residues K398–A424 form a helical membrane-spanning segment. At M425–F712 the chain is on the cytoplasmic side. S484, S485, and S486 each carry phosphoserine. Disordered regions lie at residues S493–E529 and V587–V632. Residues R500 to R509 show a composition bias toward basic residues. Basic and acidic residues-rich tracts occupy residues E510–E529 and D596–N622. The stretch at C693–G965 is one II repeat. The chain crosses the membrane as a helical span at residues V713–M730. The Extracellular segment spans residues E731 to Q738. Residues F739–I763 form a helical membrane-spanning segment. Residues A764–E773 are Cytoplasmic-facing. Residues G774–A793 traverse the membrane as a helical segment. At N794–G797 the chain is on the extracellular side. A helical transmembrane segment spans residues L798 to W816. Residues P817–G834 lie on the Cytoplasmic side of the membrane. Residues N835–F855 form a helical membrane-spanning segment. The Extracellular segment spans residues G856–F880. Cysteines 864 and 870 form a disulfide. The segment at residues F881–I896 is an intramembrane region (pore-forming). Residues E897–G907 lie on the Extracellular side of the membrane. C902 and C911 are joined by a disulfide. Residues Q908–L934 traverse the membrane as a helical segment. Residues L935 to H1157 lie on the Cytoplasmic side of the membrane. The interval E1070–E1113 is disordered. Residues K1140–L1451 form an III repeat. A helical membrane pass occupies residues N1158–E1178. Over D1179–T1190 the chain is Extracellular. A helical transmembrane segment spans residues M1191 to V1212. Residues A1213–T1218 are Cytoplasmic-facing. Residues Y1219 to L1244 traverse the membrane as a helical segment. Residues G1245–K1253 are Extracellular-facing. Residues S1254–G1272 form a helical membrane-spanning segment. At M1273–P1285 the chain is on the cytoplasmic side. The helical transmembrane segment at S1286 to L1308 threads the bilayer. Topologically, residues F1309 to N1354 are extracellular. A disulfide bond links C1316 and C1336. N-linked (GlcNAc...) asparagine glycosylation is found at N1318 and N1332. Residues V1355–W1371 constitute an intramembrane region (pore-forming). At M1372–L1394 the chain is on the extracellular side. A helical transmembrane segment spans residues Y1395 to I1420. Topologically, residues D1421 to Q1478 are cytoplasmic. S1453 carries the post-translational modification Phosphoserine. The stretch at I1460–Q1758 is one IV repeat. A helical transmembrane segment spans residues V1479 to V1497. Over E1498–Y1505 the chain is Extracellular. The chain crosses the membrane as a helical span at residues M1506–L1529. Residues I1530–I1539 are Cytoplasmic-facing. The chain crosses the membrane as a helical span at residues G1540–F1557. Topologically, residues L1558 to P1569 are extracellular. The chain crosses the membrane as a helical span at residues T1570–G1592. Topologically, residues I1593–P1605 are cytoplasmic. The helical transmembrane segment at A1606–F1629 threads the bilayer. Topologically, residues A1630–M1651 are extracellular. The segment at residues I1652–D1664 is an intramembrane region (pore-forming). The Extracellular portion of the chain corresponds to G1665 to P1696. Residues S1697–I1722 form a helical membrane-spanning segment. Topologically, residues L1723–V1947 are cytoplasmic. The IQ domain maps to E1852 to K1881. The disordered stretch occupies residues L1901 to V1947. Basic and acidic residues predominate over residues T1926 to V1947.

Belongs to the sodium channel (TC 1.A.1.10) family. Nav1.3/SCN3A subfamily. As to quaternary structure, heterooligomer of an alpha subunit, SCN3A, and 1 to 3 regulatory beta subunits including SCN1B and SCN2B; disulfide-linked with some beta subunits like SCN2B. Interacts with NEDD4L; could regulate expression of SCN3A at the plasma membrane through ubiquitination-regulated endocytosis. Post-translationally, may be ubiquitinated by NEDD4L; which would promote its endocytosis. Phosphorylation at Ser-1453 in a highly conserved cytoplasmic loop slows inactivation of the channel and reduces peak sodium currents. In terms of tissue distribution, expressed in enterochromaffin cells in both colon and small bowel (at protein level). Expressed in pancreatic alpha and beta cells.

The protein localises to the cell membrane. It is found in the basal cell membrane. It catalyses the reaction Na(+)(in) = Na(+)(out). Functionally, pore-forming subunit of Nav1.3, a voltage-gated sodium (Nav) channel that directly mediates the depolarizing phase of action potentials in excitable membranes. Navs, also called VGSCs (voltage-gated sodium channels) or VDSCs (voltage-dependent sodium channels), operate by switching between closed and open conformations depending on the voltage difference across the membrane. In the open conformation they allow Na(+) ions to selectively pass through the pore, along their electrochemical gradient. The influx of Na+ ions provokes membrane depolarization, initiating the propagation of electrical signals throughout cells and tissues. In some secretory cell types, it also participates in cell excitability through membrane depolarization and regulates cells responsiveness to stimuli triggering secretion. For instance, it controls the release of serotonin/5-hydroxytryptamine by enterochromaffin cells and is required for both glucagon- and glucose-induced insulin secretion in pancreatic endocrine cells. The chain is Sodium channel protein type 3 subunit alpha from Mus musculus (Mouse).